Consider the following 333-residue polypeptide: Eukaryotic translation initiation factor 2 subunit 2 (333 aa).

2 disordered regions span residues 1–120 (MSGD…LDIM) and 139–165 (ILEKDEALEDEDSKKDDGISFSNQTGP). Serine 2 is modified (N-acetylserine). Serine 2 carries the post-translational modification Phosphoserine. Serine 13 is modified (phosphoserine; by PKC; in vitro). Basic residues predominate over residues 13–22 (SKKKKKKKKP). Phosphothreonine is present on threonine 36. Over residues 40-51 (ETKEVEPEPTED) the composition is skewed to basic and acidic residues. At serine 67 the chain carries Phosphoserine; by CK2. Basic and acidic residues predominate over residues 96–105 (EGVKDLKIEN). Lysine 102 participates in a covalent cross-link: Glycyl lysine isopeptide (Lys-Gly) (interchain with G-Cter in SUMO2). 2 stretches are compositionally biased toward acidic residues: residues 106 to 118 (DVQEPAEPEDDLD) and 139 to 149 (ILEKDEALEDE). Phosphoserine is present on serine 158. Serine 218 carries the post-translational modification Phosphoserine; by PKA; in vitro. 2 positions are modified to N6-acetyllysine: lysine 265 and lysine 293. The segment at 281-305 (CHTCRSPDTILQKDTRLYFLQCETC) adopts a C4-type zinc-finger fold.

The protein belongs to the eIF-2-beta/eIF-5 family. As to quaternary structure, eukaryotic translation initiation factor 2 eIF2 is a heterotrimeric complex composed of an alpha (EIF2S1), a beta (EIF2S2) and a gamma (EIF2S3) chain. eIF2 is member of the 43S pre-initiation complex (43S PIC). eIF2 forms a complex with at least CELF1/CUGBP1, CALR, CALR3, EIF2S1, EIF2S2, HSP90B1 and HSPA5. Interacts with BZW2/5MP1. Interacts with EIF5. In terms of processing, the N-terminus is blocked.

It is found in the cytoplasm. The protein resides in the cytosol. In terms of biological role, component of the eIF2 complex that functions in the early steps of protein synthesis by forming a ternary complex with GTP and initiator tRNA. This complex binds to a 40S ribosomal subunit, followed by mRNA binding to form the 43S pre-initiation complex (43S PIC). Junction of the 60S ribosomal subunit to form the 80S initiation complex is preceded by hydrolysis of the GTP bound to eIF2 and release of an eIF2-GDP binary complex. In order for eIF2 to recycle and catalyze another round of initiation, the GDP bound to eIF2 must exchange with GTP by way of a reaction catalyzed by eIF2B. This Oryctolagus cuniculus (Rabbit) protein is Eukaryotic translation initiation factor 2 subunit 2 (EIF2S2).